A 360-amino-acid polypeptide reads, in one-letter code: Peptide chain release factor 1 (360 aa).

Q237 bears the N5-methylglutamine mark.

Belongs to the prokaryotic/mitochondrial release factor family. In terms of processing, methylated by PrmC. Methylation increases the termination efficiency of RF1.

It localises to the cytoplasm. Functionally, peptide chain release factor 1 directs the termination of translation in response to the peptide chain termination codons UAG and UAA. The protein is Peptide chain release factor 1 of Ectopseudomonas mendocina (strain ymp) (Pseudomonas mendocina).